Reading from the N-terminus, the 703-residue chain is Protein teflon (703 aa).

The C2H2-type 1 zinc finger occupies 32–55 (MLCHFCKDIFTHLPEFMRHLQWSH). Disordered stretches follow at residues 78-111 (SSEDDVQSQANSCSSGDSGLAGEMEDADGEPGSS), 140-161 (EQSYSKNPPDSRTEGFRCARKP), 205-239 (NDVSKPRLNKLRSKLNNSLSSNISGPPKQSKMPSL), and 339-434 (SQQP…SKLE). Positions 84 to 94 (QSQANSCSSGD) are enriched in polar residues. The segment covering 148 to 161 (PDSRTEGFRCARKP) has biased composition (basic and acidic residues). Polar residues-rich tracts occupy residues 339-352 (SQQPSELNTTNNAV) and 364-373 (SLTVISSSPI). 2 C2H2-type zinc fingers span residues 649–672 (YFCECCEEIFPNEARYKKHVQSVH) and 677–700 (FTCSECGKSFKRLYFYDKHLKTVH).

Belongs to the Teflon family.

Its subcellular location is the nucleus. The protein resides in the chromosome. Specifically required in males for proper segregation of autosomal bivalents at meiosis I. Expression is required in the male germ line prior to spermatocyte stage S4. May have a role as a bridging molecule maintaining adhesion to hold autosome bivalents together via heterochromatic connections. The polypeptide is Protein teflon (Drosophila persimilis (Fruit fly)).